A 607-amino-acid polypeptide reads, in one-letter code: Elongation factor 4 (607 aa).

Residues 11 to 193 enclose the tr-type G domain; the sequence is SKIRNFSIIA…QIVEKVPAPT (183 aa). GTP contacts are provided by residues 23–28 and 140–143; these read DHGKST and NKID.

This sequence belongs to the TRAFAC class translation factor GTPase superfamily. Classic translation factor GTPase family. LepA subfamily.

It is found in the cell membrane. The catalysed reaction is GTP + H2O = GDP + phosphate + H(+). Its function is as follows. Required for accurate and efficient protein synthesis under certain stress conditions. May act as a fidelity factor of the translation reaction, by catalyzing a one-codon backward translocation of tRNAs on improperly translocated ribosomes. Back-translocation proceeds from a post-translocation (POST) complex to a pre-translocation (PRE) complex, thus giving elongation factor G a second chance to translocate the tRNAs correctly. Binds to ribosomes in a GTP-dependent manner. The protein is Elongation factor 4 of Bacillus anthracis (strain CDC 684 / NRRL 3495).